Reading from the N-terminus, the 475-residue chain is UDP-N-acetylmuramate--L-alanine ligase (475 aa).

ATP is bound at residue 114 to 120 (GTHGKTT).

It belongs to the MurCDEF family.

It localises to the cytoplasm. The enzyme catalyses UDP-N-acetyl-alpha-D-muramate + L-alanine + ATP = UDP-N-acetyl-alpha-D-muramoyl-L-alanine + ADP + phosphate + H(+). It functions in the pathway cell wall biogenesis; peptidoglycan biosynthesis. Its function is as follows. Cell wall formation. In Bartonella tribocorum (strain CIP 105476 / IBS 506), this protein is UDP-N-acetylmuramate--L-alanine ligase.